The chain runs to 228 residues: Non-fluorescent flavoprotein (228 aa).

The protein belongs to the bacterial luciferase oxidoreductase family. Homodimer. It depends on FMN as a cofactor.

The chain is Non-fluorescent flavoprotein (luxF) from Photobacterium leiognathi.